We begin with the raw amino-acid sequence, 301 residues long: Homeobox protein Nkx-2.6 (301 aa).

Residues 22 to 135 are disordered; sequence ERSCPAASPH…QPKARQRRKP (114 aa). The segment at residues 132–191 is a DNA-binding region (homeobox); sequence RRKPRVLFSQAQVLALERRFKQQRYLSAPEREHLASALQLTSTQVKIWFQNRRYKCKRQR.

The protein belongs to the NK-2 homeobox family.

Its subcellular location is the nucleus. Its function is as follows. Acts as a transcriptional activator. In conjunction with NKX2-5, may play a role in both pharyngeal and cardiac embryonic development. This chain is Homeobox protein Nkx-2.6 (NKX2-6), found in Homo sapiens (Human).